The chain runs to 268 residues: Undecaprenyl-diphosphatase (268 aa).

A run of 7 helical transmembrane segments spans residues 5-25 (TIAQ…IPVS), 43-63 (GKAF…SVYA), 84-104 (LGIL…YQII), 107-127 (VLFE…IVLL), 184-204 (AAEF…AYDL), 214-234 (ADLQ…VLVV), and 247-267 (ALFG…VLVL).

It belongs to the UppP family.

The protein resides in the cell inner membrane. It catalyses the reaction di-trans,octa-cis-undecaprenyl diphosphate + H2O = di-trans,octa-cis-undecaprenyl phosphate + phosphate + H(+). In terms of biological role, catalyzes the dephosphorylation of undecaprenyl diphosphate (UPP). Confers resistance to bacitracin. The protein is Undecaprenyl-diphosphatase of Chelativorans sp. (strain BNC1).